The primary structure comprises 278 residues: Large ribosomal subunit protein uL2 (278 aa).

2 disordered regions span residues 33–53 (LTEG…TSRG) and 219–278 (LTRG…KKKR). The segment covering 269–278 (IRSRHAKKKR) has biased composition (basic residues).

This sequence belongs to the universal ribosomal protein uL2 family. Part of the 50S ribosomal subunit. Forms a bridge to the 30S subunit in the 70S ribosome.

In terms of biological role, one of the primary rRNA binding proteins. Required for association of the 30S and 50S subunits to form the 70S ribosome, for tRNA binding and peptide bond formation. It has been suggested to have peptidyltransferase activity; this is somewhat controversial. Makes several contacts with the 16S rRNA in the 70S ribosome. This chain is Large ribosomal subunit protein uL2, found in Sphingopyxis alaskensis (strain DSM 13593 / LMG 18877 / RB2256) (Sphingomonas alaskensis).